The chain runs to 100 residues: UPF0213 protein YhbQ (100 aa).

A GIY-YIG domain is found at 2–77 (TPWFLYLIRT…KQLTKRQKER (76 aa)).

The protein belongs to the UPF0213 family.

The chain is UPF0213 protein YhbQ from Escherichia coli O127:H6 (strain E2348/69 / EPEC).